Reading from the N-terminus, the 256-residue chain is ATP-dependent dethiobiotin synthetase BioD (256 aa).

13–18 (EVGKTY) is an ATP binding site. Residue threonine 17 participates in Mg(2+) binding. Residue lysine 38 is part of the active site. Residue serine 42 coordinates substrate. Residues aspartate 56, 118–121 (EGAG), and 187–188 (NR) each bind ATP. 2 residues coordinate Mg(2+): aspartate 56 and glutamate 118.

The protein belongs to the dethiobiotin synthetase family. In terms of assembly, homodimer. The cofactor is Mg(2+).

It is found in the cytoplasm. The catalysed reaction is (7R,8S)-7,8-diammoniononanoate + CO2 + ATP = (4R,5S)-dethiobiotin + ADP + phosphate + 3 H(+). The protein operates within cofactor biosynthesis; biotin biosynthesis; biotin from 7,8-diaminononanoate: step 1/2. Its function is as follows. Catalyzes a mechanistically unusual reaction, the ATP-dependent insertion of CO2 between the N7 and N8 nitrogen atoms of 7,8-diaminopelargonic acid (DAPA, also called 7,8-diammoniononanoate) to form a ureido ring. The polypeptide is ATP-dependent dethiobiotin synthetase BioD (Rhodopirellula baltica (strain DSM 10527 / NCIMB 13988 / SH1)).